We begin with the raw amino-acid sequence, 306 residues long: Beta-lactamase (306 aa).

The signal sequence occupies residues 1–34 (MNVKRKATLKFGICIGLLCVSFTGFNSLFGSTHA). Catalysis depends on S89, which acts as the Acyl-ester intermediate. 251-253 (KSG) serves as a coordination point for substrate.

Belongs to the class-A beta-lactamase family.

The enzyme catalyses a beta-lactam + H2O = a substituted beta-amino acid. Functionally, this protein is a beta-lactamase with a substrate specificity for penicillins. The polypeptide is Beta-lactamase (penP) (Bacillus amyloliquefaciens (Bacillus velezensis)).